The primary structure comprises 204 residues: Photosystem I reaction center subunit II-2, chloroplastic (204 aa).

Residues 1 to 44 constitute a chloroplast transit peptide; sequence MATQAAGIFSPAITTTTSAVKKLHLFSSSHRPKSLSFTKTAIRA. Threonine 47 is subject to Phosphothreonine. The tract at residues 47–71 is disordered; the sequence is TESSSAAPAVKEAPVGFTPPQLDPN. The tract at residues 137–145 is ferredoxin and ferredoxin-oxidoreductase binding; it reads RLRSKYKIT.

Belongs to the PsaD family. As to quaternary structure, interacts with CURT1C.

Its subcellular location is the plastid. It is found in the chloroplast thylakoid membrane. In terms of biological role, PSAD can form complexes with ferredoxin and ferredoxin-oxidoreductase in photosystem I (PS I) reaction center. PSAD may encode the ferredoxin-docking protein. This chain is Photosystem I reaction center subunit II-2, chloroplastic (PSAD2), found in Arabidopsis thaliana (Mouse-ear cress).